We begin with the raw amino-acid sequence, 347 residues long: tRNA N6-adenosine threonylcarbamoyltransferase (347 aa).

Positions 113 and 117 each coordinate Fe cation. Residues 136–140 (LVSGG), Asp-170, Gly-183, Asp-187, and Asn-282 each bind substrate. Residue Asp-310 coordinates Fe cation.

This sequence belongs to the KAE1 / TsaD family. Fe(2+) serves as cofactor.

It localises to the cytoplasm. It catalyses the reaction L-threonylcarbamoyladenylate + adenosine(37) in tRNA = N(6)-L-threonylcarbamoyladenosine(37) in tRNA + AMP + H(+). Its function is as follows. Required for the formation of a threonylcarbamoyl group on adenosine at position 37 (t(6)A37) in tRNAs that read codons beginning with adenine. Is involved in the transfer of the threonylcarbamoyl moiety of threonylcarbamoyl-AMP (TC-AMP) to the N6 group of A37, together with TsaE and TsaB. TsaD likely plays a direct catalytic role in this reaction. The polypeptide is tRNA N6-adenosine threonylcarbamoyltransferase (Cutibacterium acnes (strain DSM 16379 / KPA171202) (Propionibacterium acnes)).